The chain runs to 539 residues: Membrane protein insertase YidC (539 aa).

The chain crosses the membrane as a helical span at residues Val-6–Pro-26. A disordered region spans residues Pro-28–Ser-63. Residues Ala-32–Ala-45 show a composition bias toward low complexity. Over residues Val-54 to Ser-63 the composition is skewed to polar residues. Helical transmembrane passes span Tyr-349–His-369, Met-421–Leu-441, and Ile-496–Val-516.

It belongs to the OXA1/ALB3/YidC family. Type 1 subfamily. Interacts with the Sec translocase complex via SecD. Specifically interacts with transmembrane segments of nascent integral membrane proteins during membrane integration.

The protein resides in the cell inner membrane. Its function is as follows. Required for the insertion and/or proper folding and/or complex formation of integral membrane proteins into the membrane. Involved in integration of membrane proteins that insert both dependently and independently of the Sec translocase complex, as well as at least some lipoproteins. Aids folding of multispanning membrane proteins. This chain is Membrane protein insertase YidC, found in Maridesulfovibrio salexigens (strain ATCC 14822 / DSM 2638 / NCIMB 8403 / VKM B-1763) (Desulfovibrio salexigens).